Reading from the N-terminus, the 160-residue chain is Nucleotide-binding protein VV1636 (160 aa).

This sequence belongs to the YajQ family.

In terms of biological role, nucleotide-binding protein. In Vibrio vulnificus (strain YJ016), this protein is Nucleotide-binding protein VV1636.